The primary structure comprises 250 residues: Ribonuclease PH (250 aa).

Phosphate is bound by residues arginine 87 and 125 to 127 (GTR).

It belongs to the RNase PH family. In terms of assembly, homohexameric ring arranged as a trimer of dimers.

The catalysed reaction is tRNA(n+1) + phosphate = tRNA(n) + a ribonucleoside 5'-diphosphate. Its function is as follows. Phosphorolytic 3'-5' exoribonuclease that plays an important role in tRNA 3'-end maturation. Removes nucleotide residues following the 3'-CCA terminus of tRNAs; can also add nucleotides to the ends of RNA molecules by using nucleoside diphosphates as substrates, but this may not be physiologically important. Probably plays a role in initiation of 16S rRNA degradation (leading to ribosome degradation) during starvation. This chain is Ribonuclease PH, found in Moorella thermoacetica (strain ATCC 39073 / JCM 9320).